The sequence spans 125 residues: Large ribosomal subunit protein bL12 (125 aa).

It belongs to the bacterial ribosomal protein bL12 family. As to quaternary structure, homodimer. Part of the ribosomal stalk of the 50S ribosomal subunit. Forms a multimeric L10(L12)X complex, where L10 forms an elongated spine to which 2 to 4 L12 dimers bind in a sequential fashion. Binds GTP-bound translation factors.

In terms of biological role, forms part of the ribosomal stalk which helps the ribosome interact with GTP-bound translation factors. Is thus essential for accurate translation. This chain is Large ribosomal subunit protein bL12, found in Alkalilimnicola ehrlichii (strain ATCC BAA-1101 / DSM 17681 / MLHE-1).